Reading from the N-terminus, the 298-residue chain is Acetylglutamate kinase (298 aa).

Substrate contacts are provided by residues 69–70, R91, and N196; that span reads GG.

This sequence belongs to the acetylglutamate kinase family. ArgB subfamily.

The protein localises to the cytoplasm. It carries out the reaction N-acetyl-L-glutamate + ATP = N-acetyl-L-glutamyl 5-phosphate + ADP. It functions in the pathway amino-acid biosynthesis; L-arginine biosynthesis; N(2)-acetyl-L-ornithine from L-glutamate: step 2/4. Functionally, catalyzes the ATP-dependent phosphorylation of N-acetyl-L-glutamate. In Bradyrhizobium sp. (strain BTAi1 / ATCC BAA-1182), this protein is Acetylglutamate kinase.